We begin with the raw amino-acid sequence, 197 residues long: FMN-dependent NADH:quinone oxidoreductase (197 aa).

FMN is bound by residues S10 and 17–19 (SFS).

Belongs to the azoreductase type 1 family. In terms of assembly, homodimer. FMN is required as a cofactor.

The catalysed reaction is 2 a quinone + NADH + H(+) = 2 a 1,4-benzosemiquinone + NAD(+). The enzyme catalyses N,N-dimethyl-1,4-phenylenediamine + anthranilate + 2 NAD(+) = 2-(4-dimethylaminophenyl)diazenylbenzoate + 2 NADH + 2 H(+). Its function is as follows. Quinone reductase that provides resistance to thiol-specific stress caused by electrophilic quinones. Functionally, also exhibits azoreductase activity. Catalyzes the reductive cleavage of the azo bond in aromatic azo compounds to the corresponding amines. This chain is FMN-dependent NADH:quinone oxidoreductase, found in Mycoplasmoides gallisepticum (strain R(low / passage 15 / clone 2)) (Mycoplasma gallisepticum).